Reading from the N-terminus, the 258-residue chain is Cholera enterotoxin subunit A (258 aa).

An N-terminal signal peptide occupies residues 1 to 18; that stretch reads MVKIIFVFFIFLSSFSYA. NAD(+) is bound by residues 25–28 and 41–43; these read RADS and MPR. The active site involves Glu-130. Residues Cys-205 and Cys-217 are joined by a disulfide bond.

It belongs to the enterotoxin A family. In terms of assembly, the holotoxin (choleragen) consists of a pentameric ring of B subunits whose central pore is occupied by the A subunit. The A subunit contains two chains, A1 and A2, linked by a disulfide bridge. Interaction with the host protein ARF6 causes a conformation change so that the enterotoxin subunit A1 can bind NAD and catalyze the ADP-ribosylation of the host Gs alpha.

Its function is as follows. The A1 chain catalyzes the ADP-ribosylation of Gs alpha, a GTP-binding regulatory protein, to activate the adenylate cyclase. This leads to an overproduction of cAMP and eventually to a hypersecretion of chloride and bicarbonate followed by water, resulting in the characteristic cholera stool. The A2 chain tethers A1 to the pentameric ring. This is Cholera enterotoxin subunit A (ctxA) from Vibrio cholerae serotype O1 (strain ATCC 39315 / El Tor Inaba N16961).